A 477-amino-acid chain; its full sequence is ATP synthase subunit beta (477 aa).

148–155 (GGAGVGKT) serves as a coordination point for ATP.

The protein belongs to the ATPase alpha/beta chains family. F-type ATPases have 2 components, CF(1) - the catalytic core - and CF(0) - the membrane proton channel. CF(1) has five subunits: alpha(3), beta(3), gamma(1), delta(1), epsilon(1). CF(0) has three main subunits: a(1), b(2) and c(9-12). The alpha and beta chains form an alternating ring which encloses part of the gamma chain. CF(1) is attached to CF(0) by a central stalk formed by the gamma and epsilon chains, while a peripheral stalk is formed by the delta and b chains.

The protein resides in the cell inner membrane. It catalyses the reaction ATP + H2O + 4 H(+)(in) = ADP + phosphate + 5 H(+)(out). In terms of biological role, produces ATP from ADP in the presence of a proton gradient across the membrane. The catalytic sites are hosted primarily by the beta subunits. This chain is ATP synthase subunit beta, found in Psychrobacter cryohalolentis (strain ATCC BAA-1226 / DSM 17306 / VKM B-2378 / K5).